A 443-amino-acid polypeptide reads, in one-letter code: Probable glycine dehydrogenase (decarboxylating) subunit 1 (443 aa).

The protein belongs to the GcvP family. N-terminal subunit subfamily. In terms of assembly, the glycine cleavage system is composed of four proteins: P, T, L and H. In this organism, the P 'protein' is a heterodimer of two subunits.

The enzyme catalyses N(6)-[(R)-lipoyl]-L-lysyl-[glycine-cleavage complex H protein] + glycine + H(+) = N(6)-[(R)-S(8)-aminomethyldihydrolipoyl]-L-lysyl-[glycine-cleavage complex H protein] + CO2. In terms of biological role, the glycine cleavage system catalyzes the degradation of glycine. The P protein binds the alpha-amino group of glycine through its pyridoxal phosphate cofactor; CO(2) is released and the remaining methylamine moiety is then transferred to the lipoamide cofactor of the H protein. The sequence is that of Probable glycine dehydrogenase (decarboxylating) subunit 1 from Endomicrobium trichonymphae.